The following is a 246-amino-acid chain: uncharacterized protein (246 aa).

Composition is skewed to basic residues over residues 1-10 (MVWRFQKHIG) and 79-97 (TRRRGAGQRHCNQKPKAGR). The interval 1–184 (MVWRFQKHIG…LPPAHVPPTL (184 aa)) is disordered. Residues 158 to 180 (PPFPPPPPPGDPTPPSPLPPAHV) are compositionally biased toward pro residues.

This is an uncharacterized protein from Homo sapiens (Human).